A 283-amino-acid polypeptide reads, in one-letter code: Thymidylate synthase (283 aa).

Arginine 33 contacts dUMP. Histidine 63 serves as a coordination point for (6R)-5,10-methylene-5,6,7,8-tetrahydrofolate. 138-139 contributes to the dUMP binding site; it reads RR. Residue cysteine 158 is the Nucleophile of the active site. DUMP-binding positions include 185-188, asparagine 196, and 226-228; these read RSAD and HIY. Aspartate 188 provides a ligand contact to (6R)-5,10-methylene-5,6,7,8-tetrahydrofolate. A (6R)-5,10-methylene-5,6,7,8-tetrahydrofolate-binding site is contributed by alanine 282.

It belongs to the thymidylate synthase family. Bacterial-type ThyA subfamily. Homodimer.

The protein resides in the cytoplasm. It carries out the reaction dUMP + (6R)-5,10-methylene-5,6,7,8-tetrahydrofolate = 7,8-dihydrofolate + dTMP. It participates in pyrimidine metabolism; dTTP biosynthesis. Its function is as follows. Catalyzes the reductive methylation of 2'-deoxyuridine-5'-monophosphate (dUMP) to 2'-deoxythymidine-5'-monophosphate (dTMP) while utilizing 5,10-methylenetetrahydrofolate (mTHF) as the methyl donor and reductant in the reaction, yielding dihydrofolate (DHF) as a by-product. This enzymatic reaction provides an intracellular de novo source of dTMP, an essential precursor for DNA biosynthesis. The chain is Thymidylate synthase from Methylibium petroleiphilum (strain ATCC BAA-1232 / LMG 22953 / PM1).